We begin with the raw amino-acid sequence, 363 residues long: Putative dipeptidase YkvY (363 aa).

Residues Asp222, Asp233, His297, Glu326, and Glu340 each contribute to the Mn(2+) site.

It belongs to the peptidase M24B family. Mn(2+) is required as a cofactor.

The chain is Putative dipeptidase YkvY (ykvY) from Bacillus subtilis (strain 168).